Reading from the N-terminus, the 247-residue chain is Uridylate kinase (247 aa).

15 to 18 lines the ATP pocket; that stretch reads KLSG. Residues 23–28 form an involved in allosteric activation by GTP region; sequence GEEGFG. Gly-57 lines the UMP pocket. 2 residues coordinate ATP: Gly-58 and Arg-62. Residues Asp-77 and 138 to 145 contribute to the UMP site; that span reads TGNPFFTT. ATP-binding residues include Thr-165, Tyr-171, and Asp-174.

This sequence belongs to the UMP kinase family. Homohexamer.

The protein resides in the cytoplasm. It carries out the reaction UMP + ATP = UDP + ADP. The protein operates within pyrimidine metabolism; CTP biosynthesis via de novo pathway; UDP from UMP (UMPK route): step 1/1. With respect to regulation, allosterically activated by GTP. Inhibited by UTP. Catalyzes the reversible phosphorylation of UMP to UDP. In Pseudoalteromonas atlantica (strain T6c / ATCC BAA-1087), this protein is Uridylate kinase.